The primary structure comprises 465 residues: DGFKAGVKDYRLTYYTPEYQTKDTDILAAFRVTPQPGVPPEEAGWAVAAESSTGTWTTVWTDGLTSLDRYKGRCCDIEPVPGEDNQYFAYVAYPLDLFEEGSVTNMFTSIVGNVFGFKALRALRLEDLRIPTAYIQTFQGPPHGIQVERDKLNKYGRPLLGCTIKPKLGLSAKNYGRAVYECLRGGLDFTKDDENVNSRAFMRWRDRFVFCAEAIYKAQAETGEIKGHYLNATSGTCEEMIKRAVFARELGVPIVMHDYLTGGFTANTTLAHYCRDNGLLLHIHRAMHAVIDRQKNHGMHFRVLAKALRMSGGDHIHAGTVVGKLEGEREITLGFVDLLRDDFIEKDRSRGIYFTQDWVSMPGVLPVASGGIHVWHMPALTEIFGDDAVLQFGGGTLGHPWGNAPGAVANRVALEACVQARNEGRDLAREGNEVIREACKWSPELAAACEVWKEIKFEFATVDTL.

Lys4 bears the N6,N6,N6-trimethyllysine mark. Substrate is bound by residues Asn113 and Thr163. Lys165 serves as the catalytic Proton acceptor. Lys167 lines the substrate pocket. 3 residues coordinate Mg(2+): Lys191, Asp193, and Glu194. Lys191 is subject to N6-carboxylysine. Catalysis depends on His284, which acts as the Proton acceptor. 3 residues coordinate substrate: Arg285, His317, and Ser369.

The protein belongs to the RuBisCO large chain family. Type I subfamily. As to quaternary structure, heterohexadecamer of 8 large chains and 8 small chains; disulfide-linked. The disulfide link is formed within the large subunit homodimers. Requires Mg(2+) as cofactor. Post-translationally, the disulfide bond which can form in the large chain dimeric partners within the hexadecamer appears to be associated with oxidative stress and protein turnover.

It is found in the plastid. The protein localises to the chloroplast. It catalyses the reaction 2 (2R)-3-phosphoglycerate + 2 H(+) = D-ribulose 1,5-bisphosphate + CO2 + H2O. It carries out the reaction D-ribulose 1,5-bisphosphate + O2 = 2-phosphoglycolate + (2R)-3-phosphoglycerate + 2 H(+). Its function is as follows. RuBisCO catalyzes two reactions: the carboxylation of D-ribulose 1,5-bisphosphate, the primary event in carbon dioxide fixation, as well as the oxidative fragmentation of the pentose substrate in the photorespiration process. Both reactions occur simultaneously and in competition at the same active site. This Ephedra tweediana (Vining horsetail) protein is Ribulose bisphosphate carboxylase large chain.